The sequence spans 255 residues: tRNA pseudouridine synthase A (255 aa).

The active-site Nucleophile is the aspartate 60. Tyrosine 118 serves as a coordination point for substrate.

The protein belongs to the tRNA pseudouridine synthase TruA family. In terms of assembly, homodimer.

It carries out the reaction uridine(38/39/40) in tRNA = pseudouridine(38/39/40) in tRNA. Functionally, formation of pseudouridine at positions 38, 39 and 40 in the anticodon stem and loop of transfer RNAs. The sequence is that of tRNA pseudouridine synthase A from Leuconostoc mesenteroides subsp. mesenteroides (strain ATCC 8293 / DSM 20343 / BCRC 11652 / CCM 1803 / JCM 6124 / NCDO 523 / NBRC 100496 / NCIMB 8023 / NCTC 12954 / NRRL B-1118 / 37Y).